The following is a 308-amino-acid chain: Ribosomal RNA large subunit methyltransferase F (308 aa).

It belongs to the methyltransferase superfamily. METTL16/RlmF family.

The protein localises to the cytoplasm. It catalyses the reaction adenosine(1618) in 23S rRNA + S-adenosyl-L-methionine = N(6)-methyladenosine(1618) in 23S rRNA + S-adenosyl-L-homocysteine + H(+). In terms of biological role, specifically methylates the adenine in position 1618 of 23S rRNA. This is Ribosomal RNA large subunit methyltransferase F from Salmonella heidelberg (strain SL476).